We begin with the raw amino-acid sequence, 114 residues long: Probable non-functional T cell receptor beta variable 6-7 (114 aa).

Residues 1–21 (MSLGLLCCVAFSLLWAGPMNA) form the signal peptide. Positions 22–114 (GVTQTPKFHV…TSVYFCASSY (93 aa)) constitute an Ig-like domain. Cysteines 42 and 110 form a disulfide. N-linked (GlcNAc...) asparagine glycosylation is present at N84.

Alpha-beta TR is a heterodimer composed of an alpha and beta chain; disulfide-linked. The alpha-beta TR is associated with the transmembrane signaling CD3 coreceptor proteins to form the TR-CD3 (TcR or TCR). The assembly of alpha-beta TR heterodimers with CD3 occurs in the endoplasmic reticulum where a single alpha-beta TR heterodimer associates with one CD3D-CD3E heterodimer, one CD3G-CD3E heterodimer and one CD247 homodimer forming a stable octameric structure. CD3D-CD3E and CD3G-CD3E heterodimers preferentially associate with TR alpha and TR beta chains, respectively. The association of the CD247 homodimer is the last step of TcR assembly in the endoplasmic reticulum and is required for transport to the cell surface.

The protein localises to the cell membrane. Its function is as follows. Probable non-functional open reading frame (ORF) of V region of the variable domain of T cell receptor (TR) beta chain. Non-functional ORF generally cannot participate in the synthesis of a productive T cell receptor (TR) chain due to altered V-(D)-J or switch recombination and/or splicing site (at mRNA level) and/or conserved amino acid change (protein level). Alpha-beta T cell receptors are antigen specific receptors which are essential to the immune response and are present on the cell surface of T lymphocytes. Recognize peptide-major histocompatibility (MH) (pMH) complexes that are displayed by antigen presenting cells (APC), a prerequisite for efficient T cell adaptive immunity against pathogens. Binding of alpha-beta TR to pMH complex initiates TR-CD3 clustering on the cell surface and intracellular activation of LCK that phosphorylates the ITAM motifs of CD3G, CD3D, CD3E and CD247 enabling the recruitment of ZAP70. In turn ZAP70 phosphorylates LAT, which recruits numerous signaling molecules to form the LAT signalosome. The LAT signalosome propagates signal branching to three major signaling pathways, the calcium, the mitogen-activated protein kinase (MAPK) kinase and the nuclear factor NF-kappa-B (NF-kB) pathways, leading to the mobilization of transcription factors that are critical for gene expression and essential for T cell growth and differentiation. The T cell repertoire is generated in the thymus, by V-(D)-J rearrangement. This repertoire is then shaped by intrathymic selection events to generate a peripheral T cell pool of self-MH restricted, non-autoaggressive T cells. Post-thymic interaction of alpha-beta TR with the pMH complexes shapes TR structural and functional avidity. This Homo sapiens (Human) protein is Probable non-functional T cell receptor beta variable 6-7.